The chain runs to 254 residues: L-rhamnose 1-dehydrogenase (NADP(+)) (254 aa).

6 residues coordinate NADP(+): G13, S15, R16, I18, D64, and N91. The Proton donor role is filled by S144. S144, S146, Q154, and Y157 together coordinate beta-L-rhamnose. Residues Y157 and K161 each coordinate NADP(+). Y157 acts as the Proton acceptor in catalysis. K161 functions as the Lowers pKa of active site Tyr in the catalytic mechanism. Residue T189 coordinates beta-L-rhamnose. I190 contributes to the NADP(+) binding site. A beta-L-rhamnose-binding site is contributed by N195.

The protein belongs to the short-chain dehydrogenases/reductases (SDR) family.

It carries out the reaction L-rhamnofuranose + NADP(+) = L-rhamnono-1,4-lactone + NADPH + H(+). The protein operates within carbohydrate degradation; L-rhamnose degradation. In terms of biological role, involved in the non-phosphorylated metabolic pathway of L-rhamnose catabolism. Catalyzes the oxidation of L-rhamnose to yield L-rhamnono-1,4-lactone. It can also oxidize L-lyxose and L-mannose, and uses only NADP. The protein is L-rhamnose 1-dehydrogenase (NADP(+)) of Thermoplasma acidophilum (strain ATCC 25905 / DSM 1728 / JCM 9062 / NBRC 15155 / AMRC-C165).